We begin with the raw amino-acid sequence, 159 residues long: Cyclic pyranopterin monophosphate synthase (159 aa).

Substrate is bound by residues 75–77 (LCH) and 113–114 (ME). Aspartate 128 is an active-site residue.

The protein belongs to the MoaC family. In terms of assembly, homohexamer; trimer of dimers.

The catalysed reaction is (8S)-3',8-cyclo-7,8-dihydroguanosine 5'-triphosphate = cyclic pyranopterin phosphate + diphosphate. The protein operates within cofactor biosynthesis; molybdopterin biosynthesis. Its function is as follows. Catalyzes the conversion of (8S)-3',8-cyclo-7,8-dihydroguanosine 5'-triphosphate to cyclic pyranopterin monophosphate (cPMP). This chain is Cyclic pyranopterin monophosphate synthase, found in Yersinia pseudotuberculosis serotype O:1b (strain IP 31758).